The sequence spans 381 residues: Arginine biosynthesis bifunctional protein ArgJ (381 aa).

Substrate-binding residues include Thr-143, Lys-165, Thr-176, Glu-255, Asn-376, and Thr-381. Thr-176 serves as the catalytic Nucleophile.

It belongs to the ArgJ family. As to quaternary structure, heterotetramer of two alpha and two beta chains.

The protein localises to the cytoplasm. It catalyses the reaction N(2)-acetyl-L-ornithine + L-glutamate = N-acetyl-L-glutamate + L-ornithine. The enzyme catalyses L-glutamate + acetyl-CoA = N-acetyl-L-glutamate + CoA + H(+). Its pathway is amino-acid biosynthesis; L-arginine biosynthesis; L-ornithine and N-acetyl-L-glutamate from L-glutamate and N(2)-acetyl-L-ornithine (cyclic): step 1/1. It functions in the pathway amino-acid biosynthesis; L-arginine biosynthesis; N(2)-acetyl-L-ornithine from L-glutamate: step 1/4. Functionally, catalyzes two activities which are involved in the cyclic version of arginine biosynthesis: the synthesis of N-acetylglutamate from glutamate and acetyl-CoA as the acetyl donor, and of ornithine by transacetylation between N(2)-acetylornithine and glutamate. This chain is Arginine biosynthesis bifunctional protein ArgJ, found in Thermus thermophilus (strain ATCC BAA-163 / DSM 7039 / HB27).